Reading from the N-terminus, the 629-residue chain is mRNA cleavage and polyadenylation factor CLP1 (629 aa).

Glutamate 21 and lysine 72 together coordinate ATP. The tract at residues 142–166 (YIAPRTTDPNTETESDPSGTAAATV) is disordered. Residues 148-159 (TDPNTETESDPS) are compositionally biased toward polar residues. Position 183–188 (183–188 (SAGKTS)) interacts with ATP. The tract at residues 562–582 (PPRGGGGAGQPDSSTNPTDDE) is disordered.

Belongs to the Clp1 family. Clp1 subfamily. Component of a pre-mRNA cleavage factor complex. Interacts directly with PCF11.

The protein localises to the nucleus. In terms of biological role, required for endonucleolytic cleavage during polyadenylation-dependent pre-mRNA 3'-end formation. The protein is mRNA cleavage and polyadenylation factor CLP1 of Mycosarcoma maydis (Corn smut fungus).